A 1718-amino-acid polypeptide reads, in one-letter code: MNQNTTEPVAATETLAEVPEHVLRGLPEEVRLFPSAVDKTRIGVWATKPILKGKKFGPFVGDKKKRSQVKNNVYMWEVYYPNLGWMCIDATDPEKGNWLRYVNWACSGEEQNLFPLEINRAIYYKTLKPIAPGEELLVWYNGEDNPEIAAAIEEERASARSKRSSPKSRKGKKKSQENKNKGNKIQDIQLKTSEPDFTSANMRDSAEGPKEDEEKPSASALEQPATLQEVASQEVPPELATPAPAWEPQPEPDERLEAAACEVNDLGEEEEEEEEEDEEEEEDDDDDELEDEGEEEASMPNENSVKEPEIRCDEKPEDLLEEPKTTSEETLEDCSEVTPAMQIPRTKEEANGDVFETFMFPCQHCERKFTTKQGLERHMHIHISTVNHAFKCKYCGKAFGTQINRRRHERRHEAGLKRKPSQTLQPSEDLADGKASGENVASKDDSSPPSLGPDCLIMNSEKASQDTINSSVVEENGEVKELHPCKYCKKVFGTHTNMRRHQRRVHERHLIPKGVRRKGGLEEPQPPAEQAQATQNVYVPSTEPEEEGEADDVYIMDISSNISENLNYYIDGKIQTNNNTSNCDVIEMESASADLYGINCLLTPVTVEITQNIKTTQVPVTEDLPKEPLGSTNSEAKKRRTASPPALPKIKAETDSDPMVPSCSLSLPLSISTTEAVSFHKEKSVYLSSKLKQLLQTQDKLTPAGISATEIAKLGPVCVSAPASMLPVTSSRFKRRTSSPPSSPQHSPALRDFGKPSDGKAAWTDAGLTSKKSKLESHSDSPAWSLSGRDERETVSPPCFDEYKMSKEWTASSAFSSVCNQQPLDLSSGVKQKAEGTGKTPVQWESVLDLSVHKKHCSDSEGKEFKESHSVQPTCSAVKKRKPTTCMLQKVLLNEYNGIDLPVENPADGTRSPSPCKSLEAQPDPDLGPGSGFPAPTVESTPDVCPSSPALQTPSLSSGQLPPLLIPTDPSSPPPCPPVLTVATPPPPLLPTVPLPAPSSSASPHPCPSPLSNATAQSPLPILSPTVSPSPSPIPPVEPLMSAASPGPPTLSSSSSSSSSSSSFSSSSSSSSPSPPPLSAISSVVSSGDNLEASLPMISFKQEELENEGLKPREEPQSAAEQDVVVQETFNKNFVCNVCESPFLSIKDLTKHLSIHAEEWPFKCEFCVQLFKDKTDLSEHRFLLHGVGNIFVCSVCKKEFAFLCNLQQHQRDLHPDKVCTHHEFESGTLRPQNFTDPSKAHVEHMQSLPEDPLETSKEEEELNDSSEELYTTIKIMASGIKTKDPDVRLGLNQHYPSFKPPPFQYHHRNPMGIGVTATNFTTHNIPQTFTTAIRCTKCGKGVDNMPELHKHILACASASDKKRYTPKKNPVPLKQTVQPKNGVVVLDNSGKNAFRRMGQPKRLNFSVELSKMSSNKLKLNALKKKNQLVQKAILQKNKSAKQKADLKNACESSSHICPYCNREFTYIGSLNKHAAFSCPKKPLSPPKKKVSHSSKKGGHSSPASSDKNSNSNHRRRTADAEIKMQSMQTPLGKTRARSSGPTQVPLPSSSFRSKQNVKFAASVKSKKPSSSSLRNSSPIRMAKITHVEGKKPKAVAKNHSAQLSSKTSRSLHVRVQKSKAVLQSKSTLASKKRTDRFNIKSRERSGGPVTRSLQLAAAADLSENKREDGSAKQELKDFSYSLRLASRCSPPAAPYITRQYRKVKAPAAAQFQGPFFKE.

The SET domain maps to 28-141; that stretch reads EEVRLFPSAV…PGEELLVWYN (114 aa). Residues 155–335 are disordered; the sequence is ERASARSKRS…TSEETLEDCS (181 aa). A compositionally biased stretch (basic residues) spans 159 to 173; sequence ARSKRSSPKSRKGKK. Residues 189–202 show a composition bias toward polar residues; the sequence is QLKTSEPDFTSANM. Residues 204–216 show a composition bias toward basic and acidic residues; sequence DSAEGPKEDEEKP. The segment covering 265-297 has biased composition (acidic residues); it reads DLGEEEEEEEEEDEEEEEDDDDDELEDEGEEEA. Residues 294–316 form a retinoblastoma protein binding region; that stretch reads EEEASMPNENSVKEPEIRCDEKP. Residues 304-327 show a composition bias toward basic and acidic residues; it reads SVKEPEIRCDEKPEDLLEEPKTTS. Lys-347 is covalently cross-linked (Glycyl lysine isopeptide (Lys-Gly) (interchain with G-Cter in SUMO2)). 2 consecutive C2H2-type zinc fingers follow at residues 360-382 and 390-412; these read FPCQ…MHIH and FKCK…ERRH. The segment at 405–457 is disordered; that stretch reads RRRHERRHEAGLKRKPSQTLQPSEDLADGKASGENVASKDDSSPPSLGPDCLI. Ser-421 carries the post-translational modification Phosphoserine. Residues 483 to 506 form a C2H2-type 3 zinc finger; it reads HPCKYCKKVFGTHTNMRRHQRRVH. 2 disordered regions span residues 513-550 and 622-660; these read KGVR…EGEA and EDLP…DPMV. The residue at position 643 (Ser-643) is a Phosphoserine. Residues Lys-651, Lys-690, and Lys-692 each participate in a glycyl lysine isopeptide (Lys-Gly) (interchain with G-Cter in SUMO2) cross-link. The segment at 729-797 is disordered; it reads TSSRFKRRTS…GRDERETVSP (69 aa). Residues 738–748 are compositionally biased toward low complexity; the sequence is SSPPSSPQHSP. Phosphoserine is present on Ser-743. A Glycyl lysine isopeptide (Lys-Gly) (interchain with G-Cter in SUMO2) cross-link involves residue Lys-774. Residues Ser-781, Ser-785, and Ser-796 each carry the phosphoserine modification. Glycyl lysine isopeptide (Lys-Gly) (interchain with G-Cter in SUMO2) cross-links involve residues Lys-866 and Lys-879. Residues 903-1083 are disordered; it reads VENPADGTRS…SPPPLSAISS (181 aa). Low complexity predominate over residues 951–969; that stretch reads LQTPSLSSGQLPPLLIPTD. 2 consecutive short sequence motifs (SH3-binding) follow at residues 970-979 and 985-998; these read PSSPPPCPPV and PPPP…LPAP. Residues 970 to 997 are compositionally biased toward pro residues; that stretch reads PSSPPPCPPVLTVATPPPPLLPTVPLPA. Over residues 1018 to 1027 the composition is skewed to low complexity; the sequence is SPLPILSPTV. A compositionally biased stretch (pro residues) spans 1028-1038; that stretch reads SPSPSPIPPVE. Residues 1028–1052 carry the SH3-binding motif; sequence SPSPSPIPPVEPLMSAASPGPPTLS. Positions 1042–1072 are enriched in low complexity; it reads SAASPGPPTLSSSSSSSSSSSSFSSSSSSSS. 3 C2H2-type zinc fingers span residues 1134–1156, 1162–1185, and 1191–1214; these read FVCN…LSIH, FKCE…FLLH, and FVCS…RDLH. Glycyl lysine isopeptide (Lys-Gly) (interchain with G-Cter in SUMO2) cross-links involve residues Lys-1147 and Lys-1151. The segment at 1244 to 1265 is disordered; that stretch reads HMQSLPEDPLETSKEEEELNDS. The segment covering 1251–1265 has biased composition (acidic residues); it reads DPLETSKEEEELNDS. Glycyl lysine isopeptide (Lys-Gly) (interchain with G-Cter in SUMO2) cross-links involve residues Lys-1257 and Lys-1281. The C2H2-type 7; atypical zinc-finger motif lies at 1333–1355; it reads IRCTKCGKGVDNMPELHKHILAC. The C2H2-type 8; atypical zinc-finger motif lies at 1455 to 1478; it reads HICPYCNREFTYIGSLNKHAAFSC. 3 disordered regions span residues 1478–1576, 1589–1612, and 1625–1652; these read CPKK…LRNS, GKKP…RSLH, and KSTL…VTRS. Basic residues predominate over residues 1486-1498; that stretch reads PKKKVSHSSKKGG. Positions 1499 to 1511 are enriched in low complexity; it reads HSSPASSDKNSNS. 2 stretches are compositionally biased toward polar residues: residues 1525–1556 and 1599–1608; these read QSMQ…SKQN and HSAQLSSKTS. The segment covering 1635–1645 has biased composition (basic and acidic residues); sequence DRFNIKSRERS.

This sequence belongs to the class V-like SAM-binding methyltransferase superfamily. In terms of assembly, binds to the retinoblastoma protein (RB). Interacts with GATA3. Highly expressed in retinoblastoma cell lines and in brain tumors. Also expressed in a number of other cell lines and in brain, heart, skeletal muscle, liver and spleen. Isoform 1 is expressed in testis at much higher level than isoform 3.

Its subcellular location is the nucleus. It catalyses the reaction L-lysyl(9)-[histone H3] + 3 S-adenosyl-L-methionine = N(6),N(6),N(6)-trimethyl-L-lysyl(9)-[histone H3] + 3 S-adenosyl-L-homocysteine + 3 H(+). In terms of biological role, S-adenosyl-L-methionine-dependent histone methyltransferase that specifically methylates 'Lys-9' of histone H3. May function as a DNA-binding transcription factor. Binds to the macrophage-specific TPA-responsive element (MTE) of the HMOX1 (heme oxygenase 1) gene and may act as a transcriptional activator of this gene. This is PR domain zinc finger protein 2 (PRDM2) from Homo sapiens (Human).